Consider the following 197-residue polypeptide: Glycerol-3-phosphate acyltransferase (197 aa).

A run of 5 helical transmembrane segments spans residues 6–26, 58–78, 82–102, 116–136, and 157–177; these read LFIV…AIIV, AITL…AHYL, MLNV…PIFF, ALLA…VFVA, and FYLI…CLWI.

The protein belongs to the PlsY family. In terms of assembly, probably interacts with PlsX.

The protein localises to the cell inner membrane. The enzyme catalyses an acyl phosphate + sn-glycerol 3-phosphate = a 1-acyl-sn-glycero-3-phosphate + phosphate. It participates in lipid metabolism; phospholipid metabolism. In terms of biological role, catalyzes the transfer of an acyl group from acyl-phosphate (acyl-PO(4)) to glycerol-3-phosphate (G3P) to form lysophosphatidic acid (LPA). This enzyme utilizes acyl-phosphate as fatty acyl donor, but not acyl-CoA or acyl-ACP. The polypeptide is Glycerol-3-phosphate acyltransferase (Ruthia magnifica subsp. Calyptogena magnifica).